The following is a 206-amino-acid chain: Ribosomal RNA small subunit methyltransferase G (206 aa).

S-adenosyl-L-methionine is bound by residues Gly74, Leu79, 125–126, and Arg140; that span reads VE.

This sequence belongs to the methyltransferase superfamily. RNA methyltransferase RsmG family.

It is found in the cytoplasm. It carries out the reaction guanosine(527) in 16S rRNA + S-adenosyl-L-methionine = N(7)-methylguanosine(527) in 16S rRNA + S-adenosyl-L-homocysteine. Its function is as follows. Specifically methylates the N7 position of guanine in position 527 of 16S rRNA. The sequence is that of Ribosomal RNA small subunit methyltransferase G from Shewanella woodyi (strain ATCC 51908 / MS32).